Consider the following 858-residue polypeptide: Translation initiation factor IF-2 (858 aa).

The segment at 49–271 (TTTVTHPKSQ…NKPAPVRKDK (223 aa)) is disordered. The span at 80–226 (NQQQSNSRHQ…RFGGSLNSNN (147 aa)) shows a compositional bias: low complexity. The span at 239-256 (NRRRNNRNNKSRNNKNQR) shows a compositional bias: basic residues. In terms of domain architecture, tr-type G spans 359–528 (PRAPVVTVMG…LLQSEVLELT (170 aa)). Residues 368-375 (GHVDHGKT) form a G1 region. GTP is bound at residue 368-375 (GHVDHGKT). A G2 region spans residues 393 to 397 (GITQA). Residues 414-417 (DTPG) form a G3 region. GTP contacts are provided by residues 414 to 418 (DTPGH) and 468 to 471 (NKID). The tract at residues 468 to 471 (NKID) is G4. Residues 504–506 (SAK) are G5.

The protein belongs to the TRAFAC class translation factor GTPase superfamily. Classic translation factor GTPase family. IF-2 subfamily.

It localises to the cytoplasm. Functionally, one of the essential components for the initiation of protein synthesis. Protects formylmethionyl-tRNA from spontaneous hydrolysis and promotes its binding to the 30S ribosomal subunits. Also involved in the hydrolysis of GTP during the formation of the 70S ribosomal complex. This chain is Translation initiation factor IF-2, found in Lactiplantibacillus plantarum (strain ATCC BAA-793 / NCIMB 8826 / WCFS1) (Lactobacillus plantarum).